The primary structure comprises 613 residues: Dihydroxy-acid dehydratase (613 aa).

Asp81 serves as a coordination point for Mg(2+). Cys122 contributes to the [2Fe-2S] cluster binding site. Mg(2+) contacts are provided by Asp123 and Lys124. Lys124 is subject to N6-carboxylysine. Cys195 is a [2Fe-2S] cluster binding site. Glu491 serves as a coordination point for Mg(2+). Residue Ser517 is the Proton acceptor of the active site.

This sequence belongs to the IlvD/Edd family. As to quaternary structure, homodimer. [2Fe-2S] cluster is required as a cofactor. Requires Mg(2+) as cofactor.

It catalyses the reaction (2R)-2,3-dihydroxy-3-methylbutanoate = 3-methyl-2-oxobutanoate + H2O. It carries out the reaction (2R,3R)-2,3-dihydroxy-3-methylpentanoate = (S)-3-methyl-2-oxopentanoate + H2O. The protein operates within amino-acid biosynthesis; L-isoleucine biosynthesis; L-isoleucine from 2-oxobutanoate: step 3/4. Its pathway is amino-acid biosynthesis; L-valine biosynthesis; L-valine from pyruvate: step 3/4. Functionally, functions in the biosynthesis of branched-chain amino acids. Catalyzes the dehydration of (2R,3R)-2,3-dihydroxy-3-methylpentanoate (2,3-dihydroxy-3-methylvalerate) into 2-oxo-3-methylpentanoate (2-oxo-3-methylvalerate) and of (2R)-2,3-dihydroxy-3-methylbutanoate (2,3-dihydroxyisovalerate) into 2-oxo-3-methylbutanoate (2-oxoisovalerate), the penultimate precursor to L-isoleucine and L-valine, respectively. The sequence is that of Dihydroxy-acid dehydratase from Hyphomonas neptunium (strain ATCC 15444).